The chain runs to 267 residues: Probable ribosomal RNA small subunit methyltransferase A (267 aa).

5 residues coordinate S-adenosyl-L-methionine: L12, G37, E58, D83, and N100.

The protein belongs to the class I-like SAM-binding methyltransferase superfamily. rRNA adenine N(6)-methyltransferase family. RsmA subfamily.

Its subcellular location is the cytoplasm. Its function is as follows. Specifically dimethylates two adjacent adenosines in the loop of a conserved hairpin near the 3'-end of 16S rRNA in the 30S particle. May play a critical role in biogenesis of 30S subunits. This chain is Probable ribosomal RNA small subunit methyltransferase A, found in Methanococcus maripaludis (strain DSM 14266 / JCM 13030 / NBRC 101832 / S2 / LL).